The primary structure comprises 222 residues: Octanoyltransferase (222 aa).

Residues 32 to 207 (RDRPDVLMLL…AFARVFGVQC (176 aa)) form the BPL/LPL catalytic domain. Substrate is bound by residues 72 to 79 (RGGEVTYH), 139 to 141 (ALG), and 152 to 154 (GFA). C170 serves as the catalytic Acyl-thioester intermediate.

This sequence belongs to the LipB family.

The protein localises to the cytoplasm. The catalysed reaction is octanoyl-[ACP] + L-lysyl-[protein] = N(6)-octanoyl-L-lysyl-[protein] + holo-[ACP] + H(+). It functions in the pathway protein modification; protein lipoylation via endogenous pathway; protein N(6)-(lipoyl)lysine from octanoyl-[acyl-carrier-protein]: step 1/2. Catalyzes the transfer of endogenously produced octanoic acid from octanoyl-acyl-carrier-protein onto the lipoyl domains of lipoate-dependent enzymes. Lipoyl-ACP can also act as a substrate although octanoyl-ACP is likely to be the physiological substrate. The sequence is that of Octanoyltransferase from Gloeobacter violaceus (strain ATCC 29082 / PCC 7421).